The sequence spans 500 residues: Cytochrome P450 11B2, mitochondrial (500 aa).

Residues 1 to 24 (MALRAKADVWLARPWQCLPRTRAL) constitute a mitochondrion transit peptide. Position 381 (Phe381) interacts with 21-hydroxyprogesterone. Cys447 serves as a coordination point for heme.

This sequence belongs to the cytochrome P450 family. Requires heme as cofactor. Adrenal gland.

It localises to the mitochondrion inner membrane. It catalyses the reaction a steroid + 2 reduced [adrenodoxin] + O2 + 2 H(+) = an 11beta-hydroxysteroid + 2 oxidized [adrenodoxin] + H2O. The catalysed reaction is 21-hydroxyprogesterone + 2 reduced [adrenodoxin] + O2 + 2 H(+) = corticosterone + 2 oxidized [adrenodoxin] + H2O. It carries out the reaction corticosterone + 2 reduced [adrenodoxin] + O2 + 2 H(+) = 18-hydroxycorticosterone + 2 oxidized [adrenodoxin] + H2O. The enzyme catalyses 18-hydroxycorticosterone + 2 reduced [adrenodoxin] + O2 + 2 H(+) = aldosterone + 2 oxidized [adrenodoxin] + 2 H2O. It catalyses the reaction 11-deoxycortisol + 2 reduced [adrenodoxin] + O2 + 2 H(+) = cortisol + 2 oxidized [adrenodoxin] + H2O. The catalysed reaction is 21-hydroxyprogesterone + 2 reduced [adrenodoxin] + O2 + 2 H(+) = 18-hydroxy-11-deoxycorticosterone + 2 oxidized [adrenodoxin] + H2O. It carries out the reaction cortisol + 2 reduced [adrenodoxin] + O2 + 2 H(+) = 18-hydroxycortisol + 2 oxidized [adrenodoxin] + H2O. The enzyme catalyses 18-hydroxycortisol + 2 reduced [adrenodoxin] + O2 + 2 H(+) = 18-oxocortisol + 2 oxidized [adrenodoxin] + 2 H2O. Its pathway is steroid biosynthesis. Its function is as follows. A cytochrome P450 monooxygenase that catalyzes the biosynthesis of aldosterone, the main mineralocorticoid in the human body responsible for salt and water homeostasis, thus involved in blood pressure regulation, arterial hypertension, and the development of heart failure. Catalyzes three sequential oxidative reactions of 11-deoxycorticosterone (21-hydroxyprogesterone), namely 11-beta hydroxylation, followed by two successive oxidations at C18 yielding 18-hydroxy and then 18-oxo intermediates (that would not leave the enzyme active site during the consecutive hydroxylation reactions), ending with the formation of aldosterone. Can also produce 18-hydroxycortisol and 18-oxocortisol, derived from successive oxidations of cortisol at C18, normally found at very low levels, but significantly increased in primary aldosteronism, the most common form of secondary hypertension. Mechanistically, uses molecular oxygen inserting one oxygen atom into a substrate and reducing the second into a water molecule. Two electrons are provided by NADPH via a two-protein mitochondrial transfer system comprising flavoprotein FDXR (adrenodoxin/ferredoxin reductase) and nonheme iron-sulfur protein FDX1 or FDX2 (adrenodoxin/ferredoxin). Could also be involved in the androgen metabolic pathway. The sequence is that of Cytochrome P450 11B2, mitochondrial (CYP11B2) from Mesocricetus auratus (Golden hamster).